A 144-amino-acid polypeptide reads, in one-letter code: Large ribosomal subunit protein uL15 (144 aa).

Positions 1-58 (MRLNELAPEPGSRPSAKRVGRGIGSGLGKTGGRGHKGLKSRSGGSVAPGFEGGQQPLA) are disordered. Gly residues predominate over residues 21–31 (RGIGSGLGKTG).

Belongs to the universal ribosomal protein uL15 family. As to quaternary structure, part of the 50S ribosomal subunit.

Binds to the 23S rRNA. The protein is Large ribosomal subunit protein uL15 of Marinobacter nauticus (strain ATCC 700491 / DSM 11845 / VT8) (Marinobacter aquaeolei).